Consider the following 120-residue polypeptide: MITKVDRNAVRKKRHARVRKKIFGTAERPRLNVFRSNKHIYAQIIDDMKAVTIVSASTLDKEFDLESTGNIEAAKKVGELVAKRALEKGIKKVVFDRGGYLYHGRVKALADAAREAGLEF.

The protein belongs to the universal ribosomal protein uL18 family. In terms of assembly, part of the 50S ribosomal subunit; part of the 5S rRNA/L5/L18/L25 subcomplex. Contacts the 5S and 23S rRNAs.

Functionally, this is one of the proteins that bind and probably mediate the attachment of the 5S RNA into the large ribosomal subunit, where it forms part of the central protuberance. This Geobacillus sp. (strain WCH70) protein is Large ribosomal subunit protein uL18.